We begin with the raw amino-acid sequence, 75 residues long: Cytochrome c oxidase subunit 6C (75 aa).

At 1–13 (MASEVLAKPQMRG) the chain is on the mitochondrial matrix side. A helical membrane pass occupies residues 14-54 (LLARRLRIHMVGAFLISLGVAALYKFGVAEPRKKAYADFYK). At 55-75 (NYSPEKDFEEMKKAGVFRSIK) the chain is on the mitochondrial intermembrane side.

It belongs to the cytochrome c oxidase subunit 6c family. Component of the cytochrome c oxidase (complex IV, CIV), a multisubunit enzyme composed of 14 subunits. The complex is composed of a catalytic core of 3 subunits MT-CO1, MT-CO2 and MT-CO3, encoded in the mitochondrial DNA, and 11 supernumerary subunits COX4I, COX5A, COX5B, COX6A, COX6B, COX6C, COX7A, COX7B, COX7C, COX8 and NDUFA4, which are encoded in the nuclear genome. The complex exists as a monomer or a dimer and forms supercomplexes (SCs) in the inner mitochondrial membrane with NADH-ubiquinone oxidoreductase (complex I, CI) and ubiquinol-cytochrome c oxidoreductase (cytochrome b-c1 complex, complex III, CIII), resulting in different assemblies (supercomplex SCI(1)III(2)IV(1) and megacomplex MCI(2)III(2)IV(2)).

The protein resides in the mitochondrion inner membrane. It participates in energy metabolism; oxidative phosphorylation. Component of the cytochrome c oxidase, the last enzyme in the mitochondrial electron transport chain which drives oxidative phosphorylation. The respiratory chain contains 3 multisubunit complexes succinate dehydrogenase (complex II, CII), ubiquinol-cytochrome c oxidoreductase (cytochrome b-c1 complex, complex III, CIII) and cytochrome c oxidase (complex IV, CIV), that cooperate to transfer electrons derived from NADH and succinate to molecular oxygen, creating an electrochemical gradient over the inner membrane that drives transmembrane transport and the ATP synthase. Cytochrome c oxidase is the component of the respiratory chain that catalyzes the reduction of oxygen to water. Electrons originating from reduced cytochrome c in the intermembrane space (IMS) are transferred via the dinuclear copper A center (CU(A)) of subunit 2 and heme A of subunit 1 to the active site in subunit 1, a binuclear center (BNC) formed by heme A3 and copper B (CU(B)). The BNC reduces molecular oxygen to 2 water molecules using 4 electrons from cytochrome c in the IMS and 4 protons from the mitochondrial matrix. The sequence is that of Cytochrome c oxidase subunit 6C (COX6C) from Saimiri sciureus (Common squirrel monkey).